A 256-amino-acid polypeptide reads, in one-letter code: Thiazole synthase (256 aa).

Lysine 95 acts as the Schiff-base intermediate with DXP in catalysis. Residues glycine 156, 182 to 183 (AG), and 204 to 205 (NT) each bind 1-deoxy-D-xylulose 5-phosphate.

It belongs to the ThiG family. In terms of assembly, homotetramer. Forms heterodimers with either ThiH or ThiS.

It localises to the cytoplasm. It carries out the reaction [ThiS sulfur-carrier protein]-C-terminal-Gly-aminoethanethioate + 2-iminoacetate + 1-deoxy-D-xylulose 5-phosphate = [ThiS sulfur-carrier protein]-C-terminal Gly-Gly + 2-[(2R,5Z)-2-carboxy-4-methylthiazol-5(2H)-ylidene]ethyl phosphate + 2 H2O + H(+). Its pathway is cofactor biosynthesis; thiamine diphosphate biosynthesis. In terms of biological role, catalyzes the rearrangement of 1-deoxy-D-xylulose 5-phosphate (DXP) to produce the thiazole phosphate moiety of thiamine. Sulfur is provided by the thiocarboxylate moiety of the carrier protein ThiS. In vitro, sulfur can be provided by H(2)S. The sequence is that of Thiazole synthase from Enterobacter sp. (strain 638).